The following is a 169-amino-acid chain: Transmembrane protein B169L (169 aa).

A run of 2 helical transmembrane segments spans residues 28–48 (NPFIVALIITAVVLVVFFAIC) and 60–80 (TAIYVYICIVALLFLHYYVLN). An N-linked (GlcNAc...) asparagine; by host glycan is attached at asparagine 88. The disordered stretch occupies residues 107-169 (DEIIPPISPP…EVIMPSQYNN (63 aa)). Residues 144–154 (SKPASSADSKP) show a composition bias toward low complexity.

It belongs to the asfivirus B169L family.

It localises to the host membrane. The protein localises to the virion. This is Transmembrane protein B169L from Ornithodoros (relapsing fever ticks).